A 610-amino-acid polypeptide reads, in one-letter code: MFDAKAFLADVPHLPGVYRMYDAKNTIIYVGKAKDLKKRLSSYFRSQLASKKTEALVANIHHIETTITHSETEALLLEHNYIKENQPKYNVLLRDDKSYPYILLTKHQHPRITSFRGSKKVAGEYFGPYPNAGAVRETLNLLQKLFPIRQCEDSYYKNRSRPCLQYQIGRCLAPCVEGYYSQAEYDNQVNLVRLFLQGKDGQVVEHLVQKMENAAQELDFEAAARFRDQIQSVRAVQEKQFVSNERLDDLDIISIAYQHGIACVHILFVRHGKVLGNRSYFPKVPNNTDLTELADTFVGQFYLQMNQHRTIPNQIIIDQPLSEATALANVLSEQAGHKVSIADKNIRGDKSRYLALAKTNAEAALTLQLKQDTHIRQRYDSLKALLNLAEIKRMECFDISHTMGNQTVASCVVFDENGPLKSDYRRFNIEGITGGDDYAAMEQALLKRYGRHLEEEKIPDIIFIDGGKGQLNRALETFASLNVSWDKRKPLLIGVAKGVERKAGLETLLISKWDKEIHLPPDSPALHLIQHIRDESHNHAITGHRKKRQKAFTESGLESIAGVGAKRRQALLKYLGGMQGVKSATLEEIQSVPGISKQLAEVIFDTLQHS.

The GIY-YIG domain maps to 13–91 (HLPGVYRMYD…IKENQPKYNV (79 aa)). The UVR domain maps to 201–236 (GQVVEHLVQKMENAAQELDFEAAARFRDQIQSVRAV).

This sequence belongs to the UvrC family. As to quaternary structure, interacts with UvrB in an incision complex.

Its subcellular location is the cytoplasm. The UvrABC repair system catalyzes the recognition and processing of DNA lesions. UvrC both incises the 5' and 3' sides of the lesion. The N-terminal half is responsible for the 3' incision and the C-terminal half is responsible for the 5' incision. This chain is UvrABC system protein C, found in Actinobacillus pleuropneumoniae serotype 7 (strain AP76).